Consider the following 85-residue polypeptide: U4-theraphotoxin-Hhn1g (85 aa).

Positions 1 to 22 (MKVTLIAILTCAAVLVLHTTAA) are cleaved as a signal peptide. The propeptide occupies 23–48 (EELEAESQLMEVGMPDTELAAVDEER). 3 disulfides stabilise this stretch: Cys52-Cys66, Cys56-Cys77, and Cys71-Cys82.

The protein belongs to the neurotoxin 12 (Hwtx-2) family. 02 (Hwtx-2) subfamily. In terms of tissue distribution, expressed by the venom gland.

The protein localises to the secreted. In terms of biological role, postsynaptic neurotoxin. The polypeptide is U4-theraphotoxin-Hhn1g (Cyriopagopus hainanus (Chinese bird spider)).